A 1678-amino-acid chain; its full sequence is Hispidin synthase (1678 aa).

The segment at 33–453 is adenylation (A) domain; the sequence is GEHRWSYREL…WLGRNTDFIQ (421 aa). The Carrier 1 domain maps to 586 to 661; the sequence is DELSNTVKHI…SLSNAVYAKL (76 aa). At S620 the chain carries O-(pantetheine 4'-phosphoryl)serine. One can recognise a Ketosynthase family 3 (KS3) domain in the interval 683-1108; it reads GKEIVVVGQA…GTLGGIVLEA (426 aa). Active-site for beta-ketoacyl synthase activity residues include C852, H988, and H1029. The interval 1201–1499 is malonyl-CoA:ACP transacylase (MAT) domain; that stretch reads YKRGALAFAF…VAWSLLLSNG (299 aa). The tract at residues 1562 to 1582 is disordered; it reads EETLSSGSSTPTLENTDLDSG. The segment covering 1564 to 1576 has biased composition (polar residues); it reads TLSSGSSTPTLEN. In terms of domain architecture, Carrier 2 spans 1597 to 1672; it reads DDLRDSIVSS…EMVSNLVEQA (76 aa). O-(pantetheine 4'-phosphoryl)serine is present on S1632.

This sequence in the N-terminal section; belongs to the NRP synthetase family.

The enzyme catalyses (E)-caffeate + 2 malonyl-CoA + ATP + H(+) = hispidin + AMP + 2 CO2 + diphosphate + 2 CoA. The protein operates within secondary metabolite biosynthesis. PKS-NRPS hybrid synthetase; part of the gene cluster that mediates the fungal bioluminescence cycle. Performs the biosynthesis of hispidin from caffeic acid by two cycles of addition of malonyl units followed by lactonization. The fungal bioluminescence cycle begins with the hispidin synthetase that catalyzes the formation of hispidin which is further hydroxylated by the hispidin-3-hydroxylase, yielding the fungal luciferin 3-hydroxyhispidin. The luciferase then produces an endoperoxide as a high-energy intermediate with decomposition that yields oxyluciferin (also known as caffeoylpyruvate) and light emission. Oxyluciferin can be recycled to caffeic acid by caffeoylpyruvate hydrolase. This chain is Hispidin synthase, found in Neonothopanus nambi (Agaricus nambi).